The chain runs to 283 residues: Polyamine aminopropyltransferase (283 aa).

The region spanning 5 to 238 (TTWIDEYHKG…GIWSWTFASS (234 aa)) is the PABS domain. Glutamine 32 contributes to the S-methyl-5'-thioadenosine binding site. Positions 63 and 87 each coordinate spermidine. Residues glutamate 107 and 139-140 (DG) contribute to the S-methyl-5'-thioadenosine site. Catalysis depends on aspartate 158, which acts as the Proton acceptor. 158–161 (DCSD) provides a ligand contact to spermidine.

The protein belongs to the spermidine/spermine synthase family. In terms of assembly, homodimer or homotetramer.

Its subcellular location is the cytoplasm. The catalysed reaction is S-adenosyl 3-(methylsulfanyl)propylamine + putrescine = S-methyl-5'-thioadenosine + spermidine + H(+). Its pathway is amine and polyamine biosynthesis; spermidine biosynthesis; spermidine from putrescine: step 1/1. Catalyzes the irreversible transfer of a propylamine group from the amino donor S-adenosylmethioninamine (decarboxy-AdoMet) to putrescine (1,4-diaminobutane) to yield spermidine. The protein is Polyamine aminopropyltransferase of Prochlorococcus marinus (strain AS9601).